Here is a 612-residue protein sequence, read N- to C-terminus: UvrABC system protein C (612 aa).

A GIY-YIG domain is found at 20 to 98 (THSGVYRMLD…IKQHRPKYNI (79 aa)). The 36-residue stretch at 208-243 (SSVLEEISAKMYQASEDMEYEKAQVYRDQLVVLRKL) folds into the UVR domain.

Belongs to the UvrC family. As to quaternary structure, interacts with UvrB in an incision complex.

The protein resides in the cytoplasm. Functionally, the UvrABC repair system catalyzes the recognition and processing of DNA lesions. UvrC both incises the 5' and 3' sides of the lesion. The N-terminal half is responsible for the 3' incision and the C-terminal half is responsible for the 5' incision. This is UvrABC system protein C from Francisella tularensis subsp. mediasiatica (strain FSC147).